The chain runs to 729 residues: DNA topoisomerase 3 (729 aa).

Residues 3–136 (KKAVLAEKPS…VKRLWISSVT (134 aa)) form the Toprim domain. The Mg(2+) site is built by Glu9 and Asp105. Residues 153-590 (YETLYAAAAA…EMKEYAKAVV (438 aa)) enclose the Topo IA-type catalytic domain. The tract at residues 187 to 192 (SCGRVQ) is interaction with DNA. The O-(5'-phospho-DNA)-tyrosine intermediate role is filled by Tyr311. Residues 680–708 (FEQRRKQNKHKNVSKREVQSYMKKQNKQD) form a disordered region.

Belongs to the type IA topoisomerase family. It depends on Mg(2+) as a cofactor.

It catalyses the reaction ATP-independent breakage of single-stranded DNA, followed by passage and rejoining.. Releases the supercoiling and torsional tension of DNA, which is introduced during the DNA replication and transcription, by transiently cleaving and rejoining one strand of the DNA duplex. Introduces a single-strand break via transesterification at a target site in duplex DNA. The scissile phosphodiester is attacked by the catalytic tyrosine of the enzyme, resulting in the formation of a DNA-(5'-phosphotyrosyl)-enzyme intermediate and the expulsion of a 3'-OH DNA strand. The free DNA strand then undergoes passage around the unbroken strand, thus removing DNA supercoils. Finally, in the religation step, the DNA 3'-OH attacks the covalent intermediate to expel the active-site tyrosine and restore the DNA phosphodiester backbone. This chain is DNA topoisomerase 3, found in Shouchella clausii (strain KSM-K16) (Alkalihalobacillus clausii).